The sequence spans 232 residues: Biosynthetic peptidoglycan transglycosylase (232 aa).

A helical membrane pass occupies residues 12–31; that stretch reads YLLWFMAASVVLVAVLRWVP.

It belongs to the glycosyltransferase 51 family.

It localises to the cell inner membrane. The enzyme catalyses [GlcNAc-(1-&gt;4)-Mur2Ac(oyl-L-Ala-gamma-D-Glu-L-Lys-D-Ala-D-Ala)](n)-di-trans,octa-cis-undecaprenyl diphosphate + beta-D-GlcNAc-(1-&gt;4)-Mur2Ac(oyl-L-Ala-gamma-D-Glu-L-Lys-D-Ala-D-Ala)-di-trans,octa-cis-undecaprenyl diphosphate = [GlcNAc-(1-&gt;4)-Mur2Ac(oyl-L-Ala-gamma-D-Glu-L-Lys-D-Ala-D-Ala)](n+1)-di-trans,octa-cis-undecaprenyl diphosphate + di-trans,octa-cis-undecaprenyl diphosphate + H(+). The protein operates within cell wall biogenesis; peptidoglycan biosynthesis. Functionally, peptidoglycan polymerase that catalyzes glycan chain elongation from lipid-linked precursors. The chain is Biosynthetic peptidoglycan transglycosylase from Pseudomonas aeruginosa (strain ATCC 15692 / DSM 22644 / CIP 104116 / JCM 14847 / LMG 12228 / 1C / PRS 101 / PAO1).